Here is a 218-residue protein sequence, read N- to C-terminus: Small ribosomal subunit protein uS3c (218 aa).

A KH type-2 domain is found at 47 to 118 (VQKHMRISSG…RLNIAIARVP (72 aa)).

This sequence belongs to the universal ribosomal protein uS3 family. Part of the 30S ribosomal subunit.

Its subcellular location is the plastid. It is found in the chloroplast. The polypeptide is Small ribosomal subunit protein uS3c (rps3) (Nuphar advena (Common spatterdock)).